The sequence spans 382 residues: D-galactonate dehydratase (382 aa).

Residue Asp-183 coordinates Mg(2+). Catalysis depends on His-185, which acts as the Proton donor. Residues Glu-209 and Glu-235 each coordinate Mg(2+). His-285 (proton acceptor) is an active-site residue.

It belongs to the mandelate racemase/muconate lactonizing enzyme family. GalD subfamily. The cofactor is Mg(2+).

It carries out the reaction D-galactonate = 2-dehydro-3-deoxy-D-galactonate + H2O. It participates in carbohydrate acid metabolism; D-galactonate degradation; D-glyceraldehyde 3-phosphate and pyruvate from D-galactonate: step 1/3. In terms of biological role, catalyzes the dehydration of D-galactonate to 2-keto-3-deoxy-D-galactonate. The sequence is that of D-galactonate dehydratase from Xanthomonas campestris pv. campestris (strain 8004).